The chain runs to 360 residues: 3-isopropylmalate dehydrogenase (360 aa).

Positions 66-75 are enriched in basic residues; it reads RCHPARRRRR. Positions 66-101 are disordered; the sequence is RCHPARRRRRSEMGRHRPGHPPGARPAENPFATGPV. The substrate site is built by R133 and D223. Residues D223, D247, and D251 each coordinate Mg(2+).

It belongs to the isocitrate and isopropylmalate dehydrogenases family. LeuB type 1 subfamily. As to quaternary structure, homodimer. It depends on Mg(2+) as a cofactor. Mn(2+) is required as a cofactor.

It localises to the cytoplasm. The enzyme catalyses (2R,3S)-3-isopropylmalate + NAD(+) = 4-methyl-2-oxopentanoate + CO2 + NADH. Its pathway is amino-acid biosynthesis; L-leucine biosynthesis; L-leucine from 3-methyl-2-oxobutanoate: step 3/4. Catalyzes the oxidation of 3-carboxy-2-hydroxy-4-methylpentanoate (3-isopropylmalate) to 3-carboxy-4-methyl-2-oxopentanoate. The product decarboxylates to 4-methyl-2 oxopentanoate. In Azotobacter vinelandii, this protein is 3-isopropylmalate dehydrogenase (leuB).